The primary structure comprises 250 residues: Pyrroloquinoline-quinone synthase (250 aa).

Belongs to the PqqC family.

It carries out the reaction 6-(2-amino-2-carboxyethyl)-7,8-dioxo-1,2,3,4,7,8-hexahydroquinoline-2,4-dicarboxylate + 3 O2 = pyrroloquinoline quinone + 2 H2O2 + 2 H2O + H(+). The protein operates within cofactor biosynthesis; pyrroloquinoline quinone biosynthesis. Its function is as follows. Ring cyclization and eight-electron oxidation of 3a-(2-amino-2-carboxyethyl)-4,5-dioxo-4,5,6,7,8,9-hexahydroquinoline-7,9-dicarboxylic-acid to PQQ. In Xanthomonas oryzae pv. oryzae (strain KACC10331 / KXO85), this protein is Pyrroloquinoline-quinone synthase.